The following is a 35-amino-acid chain: Sperm protamine alpha isoform 1 (35 aa).

The disordered stretch occupies residues 1-35; it reads MPRRRRRASRPVRRRRRARRSTAVRRRRRVVRRRR. Residues Ser9 and Ser21 each carry the phosphoserine modification.

Post-translationally, phosphorylated in immature sperm. Dephosphorylated in mature sperm allowing a stronger interaction with DNA. Gonads.

The protein resides in the nucleus. Its subcellular location is the chromosome. Its function is as follows. Protamines substitute for histones in the chromatin of sperm during the haploid phase of spermatogenesis. They compact sperm DNA into a highly condensed, stable and inactive complex. This Scomber scombrus (Atlantic mackerel) protein is Sperm protamine alpha isoform 1.